We begin with the raw amino-acid sequence, 399 residues long: S-adenosylmethionine synthase (399 aa).

Histidine 16 provides a ligand contact to ATP. Aspartate 18 is a Mg(2+) binding site. Glutamate 44 provides a ligand contact to K(+). L-methionine contacts are provided by glutamate 57 and glutamine 100. Residues 100–110 are flexible loop; that stretch reads QSSDIAQGVNE. ATP-binding positions include 177–179, 244–245, aspartate 253, 259–260, alanine 276, and lysine 280; these read DAK, RF, and RK. Aspartate 253 provides a ligand contact to L-methionine. Position 284 (lysine 284) interacts with L-methionine.

The protein belongs to the AdoMet synthase family. Homotetramer; dimer of dimers. The cofactor is Mg(2+). K(+) is required as a cofactor.

It localises to the cytoplasm. It carries out the reaction L-methionine + ATP + H2O = S-adenosyl-L-methionine + phosphate + diphosphate. It participates in amino-acid biosynthesis; S-adenosyl-L-methionine biosynthesis; S-adenosyl-L-methionine from L-methionine: step 1/1. Functionally, catalyzes the formation of S-adenosylmethionine (AdoMet) from methionine and ATP. The overall synthetic reaction is composed of two sequential steps, AdoMet formation and the subsequent tripolyphosphate hydrolysis which occurs prior to release of AdoMet from the enzyme. The polypeptide is S-adenosylmethionine synthase (Lactococcus lactis subsp. cremoris (strain MG1363)).